Consider the following 565-residue polypeptide: Phosphomethylpyrimidine synthase (565 aa).

Residues N203, M232, Y261, H297, 317–319, 358–361, and E397 contribute to the substrate site; these read SRG and DGLR. Zn(2+) is bound at residue H401. Y424 provides a ligand contact to substrate. Residue H465 coordinates Zn(2+). C541, C544, and C549 together coordinate [4Fe-4S] cluster.

This sequence belongs to the ThiC family. It depends on [4Fe-4S] cluster as a cofactor.

The catalysed reaction is 5-amino-1-(5-phospho-beta-D-ribosyl)imidazole + S-adenosyl-L-methionine = 4-amino-2-methyl-5-(phosphooxymethyl)pyrimidine + CO + 5'-deoxyadenosine + formate + L-methionine + 3 H(+). It functions in the pathway cofactor biosynthesis; thiamine diphosphate biosynthesis. Catalyzes the synthesis of the hydroxymethylpyrimidine phosphate (HMP-P) moiety of thiamine from aminoimidazole ribotide (AIR) in a radical S-adenosyl-L-methionine (SAM)-dependent reaction. In Bacteroides thetaiotaomicron (strain ATCC 29148 / DSM 2079 / JCM 5827 / CCUG 10774 / NCTC 10582 / VPI-5482 / E50), this protein is Phosphomethylpyrimidine synthase.